The sequence spans 141 residues: Small ribosomal subunit protein uS12 (141 aa).

The tract at residues 118 to 141 (TGVDKRRQQRSAYGAKRPKADKKK) is disordered.

Belongs to the universal ribosomal protein uS12 family. As to quaternary structure, part of the 30S ribosomal subunit. Contacts proteins S8 and S17. May interact with IF1 in the 30S initiation complex.

With S4 and S5 plays an important role in translational accuracy. Its function is as follows. Interacts with and stabilizes bases of the 16S rRNA that are involved in tRNA selection in the A site and with the mRNA backbone. Located at the interface of the 30S and 50S subunits, it traverses the body of the 30S subunit contacting proteins on the other side and probably holding the rRNA structure together. The combined cluster of proteins S8, S12 and S17 appears to hold together the shoulder and platform of the 30S subunit. The polypeptide is Small ribosomal subunit protein uS12 (Mycoplasmoides gallisepticum (strain R(low / passage 15 / clone 2)) (Mycoplasma gallisepticum)).